The sequence spans 557 residues: Probable tRNA-splicing endonuclease subunit tsp-5 (557 aa).

Disordered stretches follow at residues 1 to 36, 131 to 152, 225 to 252, 370 to 403, and 514 to 557; these read MPLD…MMDE, KLTK…DRKL, SVPA…EDDD, PSST…SDSP, and SGGP…GRGN. Basic and acidic residues predominate over residues 131 to 140; it reads KLTKRGKEGA. Residues 370–381 show a composition bias toward low complexity; it reads PSSTSSSASPTA. Gly residues-rich tracts occupy residues 517 to 527 and 538 to 549; these read PRRGGGGGGKK and GRGGGRGGGRGG.

It belongs to the SEN54 family. As to quaternary structure, tRNA splicing endonuclease is a heterotetramer composed of tsp-2/sen2, tsp-1/sen15, tsp-4/sen34 and tsp-5/sen54. Interacts directly with tsp-2/sen2.

Its function is as follows. Non-catalytic subunit of the tRNA-splicing endonuclease complex, a complex responsible for identification and cleavage of the splice sites in pre-tRNA. It cleaves pre-tRNA at the 5' and 3' splice sites to release the intron. The products are an intron and two tRNA half-molecules bearing 2',3' cyclic phosphate and 5'-OH termini. There are no conserved sequences at the splice sites, but the intron is invariably located at the same site in the gene, placing the splice sites an invariant distance from the constant structural features of the tRNA body. May be required to embody the molecular ruler of the complex. The polypeptide is Probable tRNA-splicing endonuclease subunit tsp-5 (tsp-5) (Neurospora crassa (strain ATCC 24698 / 74-OR23-1A / CBS 708.71 / DSM 1257 / FGSC 987)).